The primary structure comprises 82 residues: MNPLIAAASVVAAGLSVGLAAIGPGMGQGTAAGYAVEGIARQPEAEGKIRGALLLSFAFMESLTIYGLVVALALLFANPFAS.

Helical transmembrane passes span 3 to 23 and 57 to 77; these read PLIA…AAIG and FAFM…LLFA.

The protein belongs to the ATPase C chain family. F-type ATPases have 2 components, F(1) - the catalytic core - and F(0) - the membrane proton channel. F(1) has five subunits: alpha(3), beta(3), gamma(1), delta(1), epsilon(1). F(0) has four main subunits: a(1), b(1), b'(1) and c(10-14). The alpha and beta chains form an alternating ring which encloses part of the gamma chain. F(1) is attached to F(0) by a central stalk formed by the gamma and epsilon chains, while a peripheral stalk is formed by the delta, b and b' chains.

Its subcellular location is the plastid. The protein localises to the chloroplast thylakoid membrane. F(1)F(0) ATP synthase produces ATP from ADP in the presence of a proton or sodium gradient. F-type ATPases consist of two structural domains, F(1) containing the extramembraneous catalytic core and F(0) containing the membrane proton channel, linked together by a central stalk and a peripheral stalk. During catalysis, ATP synthesis in the catalytic domain of F(1) is coupled via a rotary mechanism of the central stalk subunits to proton translocation. Its function is as follows. Key component of the F(0) channel; it plays a direct role in translocation across the membrane. A homomeric c-ring of between 10-14 subunits forms the central stalk rotor element with the F(1) delta and epsilon subunits. In Oltmannsiellopsis viridis (Marine flagellate), this protein is ATP synthase subunit c, chloroplastic.